A 225-amino-acid chain; its full sequence is MSLQIPAQPQLLVRQLGRRPYQPVWDAMKAFTDNRTSDTPDEFWVVEHDPVYTQGQAGKAEHLLAPGDIPVVQSDRGGQVTYHGPGQLVLYVLVDVRRSKLSVRELVTCLETAIINTLAKSDIQAYAKADAPGVYVTNELGMEAKLASLGLRIRKGCSFHGLALNINMDMTPFLRINPCGYAGMAMTQTSALGGPQSVAEAQAILVAELASLIGYQTITNADDTP.

Positions 37-217 (SDTPDEFWVV…ELASLIGYQT (181 aa)) constitute a BPL/LPL catalytic domain. Substrate-binding positions include 76 to 83 (RGGQVTYH), 148 to 150 (SLG), and 161 to 163 (GLA). Cysteine 179 acts as the Acyl-thioester intermediate in catalysis.

It belongs to the LipB family.

The protein resides in the cytoplasm. It carries out the reaction octanoyl-[ACP] + L-lysyl-[protein] = N(6)-octanoyl-L-lysyl-[protein] + holo-[ACP] + H(+). It functions in the pathway protein modification; protein lipoylation via endogenous pathway; protein N(6)-(lipoyl)lysine from octanoyl-[acyl-carrier-protein]: step 1/2. Catalyzes the transfer of endogenously produced octanoic acid from octanoyl-acyl-carrier-protein onto the lipoyl domains of lipoate-dependent enzymes. Lipoyl-ACP can also act as a substrate although octanoyl-ACP is likely to be the physiological substrate. This is Octanoyltransferase from Aeromonas salmonicida (strain A449).